The following is a 116-amino-acid chain: MARVTVEDCIQKVPNRFELVLLAAHRARMIREGSPLTIDRDNDKDPVVSLREIAETSIDLKVVKEALISNLQDIRPGEENEREADRVALQAAPAATEDDVLRAYQAELESGRDDRL.

This sequence belongs to the RNA polymerase subunit omega family. As to quaternary structure, the RNAP catalytic core consists of 2 alpha, 1 beta, 1 beta' and 1 omega subunit. When a sigma factor is associated with the core the holoenzyme is formed, which can initiate transcription.

It catalyses the reaction RNA(n) + a ribonucleoside 5'-triphosphate = RNA(n+1) + diphosphate. Promotes RNA polymerase assembly. Latches the N- and C-terminal regions of the beta' subunit thereby facilitating its interaction with the beta and alpha subunits. The protein is DNA-directed RNA polymerase subunit omega of Hyphomonas neptunium (strain ATCC 15444).